Reading from the N-terminus, the 787-residue chain is Integrin beta-3 (787 aa).

The N-terminal stretch at Met-1–Gly-25 is a signal peptide. At Ser-27–Asp-717 the chain is on the extracellular side. Residues Ile-29–Ser-75 enclose the PSI domain. 19 disulfides stabilise this stretch: Cys-30/Cys-48, Cys-38/Cys-460, Cys-41/Cys-63, Cys-51/Cys-74, Cys-202/Cys-209, Cys-257/Cys-298, Cys-399/Cys-411, Cys-431/Cys-458, Cys-462/Cys-482, Cys-473/Cys-485, Cys-487/Cys-496, Cys-498/Cys-528, Cys-511/Cys-526, Cys-520/Cys-531, Cys-533/Cys-546, Cys-548/Cys-569, Cys-553/Cys-567, Cys-561/Cys-572, and Cys-574/Cys-583. Residues Asp-134–Ile-376 enclose the VWFA domain. Mg(2+)-binding residues include Ser-146 and Ser-148. Ca(2+)-binding residues include Ser-148, Asp-151, Asp-152, and Asp-183. The interval Cys-202–Cys-209 is CX3CL1-binding. The involved in CX3CL1-, NRG1-, FGF1- and IGF1-binding stretch occupies residues Cys-202–Cys-209. Ca(2+)-binding residues include Asn-240, Asp-242, Pro-244, Glu-245, and Asp-276. Glu-245 is a binding site for Mg(2+). Residues Leu-292 to Met-312 form a CX3CL1-binding region. N-linked (GlcNAc...) asparagine glycans are attached at residues Asn-345 and Asn-396. I-EGF domains lie at Cys-462–Glu-497, Cys-498–Glu-547, Cys-548–Asn-584, and Cys-585–Glu-624. N-linked (GlcNAc...) asparagine glycosylation is present at Asn-477. N-linked (GlcNAc...) asparagine glycosylation is present at Asn-584. 9 disulfides stabilise this stretch: Cys-585-Cys-608, Cys-592-Cys-606, Cys-600-Cys-611, Cys-613-Cys-623, Cys-626-Cys-629, Cys-633-Cys-680, Cys-639-Cys-660, Cys-642-Cys-656, and Cys-688-Cys-712. Residue Asn-679 is glycosylated (N-linked (GlcNAc...) asparagine). A helical membrane pass occupies residues Ile-718–Leu-738. At Ile-739–Thr-787 the chain is on the cytoplasmic side. At Thr-766 the chain carries Phosphothreonine. Tyr-772 carries the phosphotyrosine modification. The LIR signature appears at Thr-776–Ile-782. At Thr-778 the chain carries Phosphothreonine. Residue Tyr-784 is modified to Phosphotyrosine.

The protein belongs to the integrin beta chain family. In terms of assembly, heterodimer of an alpha and a beta subunit. Beta-3 (ITGB3) associates with either alpha-IIB (ITGA2B) or alpha-V (ITGAV). Interacts with FLNB and COMP. Interacts with PDIA6 following platelet stimulation. Interacts with SYK; upon activation by ITGB3 promotes platelet adhesion. Interacts with MYO10. Interacts with DAB2. Interacts with FERMT2. Integrin ITGAV:ITGB3 interacts with FBLN5 (via N-terminus). Interacts with EMP2; regulates the levels of the heterodimer ITGA5:ITGB3 integrin expression on the plasma membrane. ITGAV:ITGB3 interacts with CCN3. ITGAV:ITGB3 and ITGA2B:ITGB3 interact with SELP (via C-type lectin domain); the interaction mediates cell-cell interaction and adhesion. ITGAV:ITGB3 interacts with AGRA2. ITGAV:ITGB3 is found in a ternary complex with CX3CR1 and CX3CL1. ITGAV:ITGB3 is found in a ternary complex with NRG1 and ERBB3. ITGAV:ITGB3 is found in a ternary complex with FGF1 and FGFR1. ITGAV:ITGB3 interacts with FGF2; it is likely that FGF2 can simultaneously bind ITGAV:ITGB3 and FGF receptors. ITGAV:ITGB3 binds to IL1B. ITGAV:ITGB3 is found in a ternary complex with IGF1 and IGF1R. ITGAV:ITGB3 interacts with IGF2. ITGAV:ITGB3 interacts with FBN1. ITGAV:ITGB3 interacts with CD9, CD81 and CD151 (via second extracellular domain). Interacts (via the allosteric site (site 2)) with CXCL12 in a CXCR4-independent manner. Interacts with MXRA8/DICAM; the interaction inhibits ITGAV:ITGB3 heterodimer formation. ITGAV:ITGB3 interacts with PTN. Forms a complex with PTPRZ1 and PTN that stimulates endothelial cell migration through ITGB3 Tyr-772 phosphorylation. ITGAV:ITGB3 interacts with SLC6A4. Interacts with SLC6A4 (via C-terminus); this interaction regulates SLC6A4 trafficking. ITGA2B:ITGB3 interacts with PPIA/CYPA; the interaction is ROS and PPIase activity-dependent and is increased in the presence of thrombin. Interacts with tensin TNS3; TNS3 also interacts with PEAK1, thus acting as an adapter molecule to bridge the association of PEAK1 with ITGB3. Interacts with TM4SF19. Post-translationally, phosphorylated on tyrosine residues in response to thrombin-induced platelet aggregation. Probably involved in outside-in signaling.

It localises to the cell membrane. It is found in the cell projection. Its subcellular location is the lamellipodium membrane. The protein localises to the cell junction. The protein resides in the focal adhesion. It localises to the postsynaptic cell membrane. It is found in the synapse. In terms of biological role, integrin alpha-V/beta-3 (ITGAV:ITGB3) is a receptor for cytotactin, fibronectin, laminin, matrix metalloproteinase-2, osteopontin, osteomodulin, prothrombin, thrombospondin, vitronectin and von Willebrand factor. Integrin alpha-IIB/beta-3 (ITGA2B:ITGB3) is a receptor for fibronectin, fibrinogen, plasminogen, prothrombin, thrombospondin and vitronectin. Integrins alpha-IIB/beta-3 and alpha-V/beta-3 recognize the sequence R-G-D in a wide array of ligands. Integrin alpha-IIB/beta-3 recognizes the sequence H-H-L-G-G-G-A-K-Q-A-G-D-V in fibrinogen gamma chain. Following activation integrin alpha-IIB/beta-3 brings about platelet/platelet interaction through binding of soluble fibrinogen. This step leads to rapid platelet aggregation which physically plugs ruptured endothelial surfaces. Fibrinogen binding enhances SELP expression in activated platelets. ITGAV:ITGB3 binds to fractalkine (CX3CL1) and acts as its coreceptor in CX3CR1-dependent fractalkine signaling. ITGAV:ITGB3 binds to NRG1 (via EGF domain) and this binding is essential for NRG1-ERBB signaling. ITGAV:ITGB3 binds to FGF1 and this binding is essential for FGF1 signaling. ITGAV:ITGB3 binds to FGF2 and this binding is essential for FGF2 signaling. ITGAV:ITGB3 binds to IGF1 and this binding is essential for IGF1 signaling. ITGAV:ITGB3 binds to IGF2 and this binding is essential for IGF2 signaling. ITGAV:ITGB3 binds to IL1B and this binding is essential for IL1B signaling. ITGAV:ITGB3 binds to PLA2G2A via a site (site 2) which is distinct from the classical ligand-binding site (site 1) and this induces integrin conformational changes and enhanced ligand binding to site 1. ITGAV:ITGB3 acts as a receptor for fibrillin-1 (FBN1) and mediates R-G-D-dependent cell adhesion to FBN1. In brain, plays a role in synaptic transmission and plasticity. Involved in the regulation of the serotonin neurotransmission, is required to localize to specific compartments within the synapse the serotonin receptor SLC6A4 and for an appropriate reuptake of serotonin. Controls excitatory synaptic strength by regulating GRIA2-containing AMPAR endocytosis, which affects AMPAR abundance and composition. ITGAV:ITGB3 acts as a receptor for CD40LG. ITGAV:ITGB3 acts as a receptor for IBSP and promotes cell adhesion and migration to IBSP. In Rattus norvegicus (Rat), this protein is Integrin beta-3.